The primary structure comprises 252 residues: Adenosylcobinamide-GDP ribazoletransferase (252 aa).

7 helical membrane-spanning segments follow: residues 36–56, 59–79, 109–129, 133–153, 170–192, 199–218, and 228–248; these read LVPIVGLIIGGIMGVTYMLLV, FFYKISAVLVLIEYIFLTGGI, VGTNAVLAVISVIILNYVILT, PAYMVKVIILFPVAGRLGSIV, SFIDYCTLKELAIGIILYAVIFL, GYIIMIFPILTAVILIKYFT, and ILGAVCELNQTFYLMTVYAVL.

Belongs to the CobS family. Mg(2+) serves as cofactor.

The protein resides in the cell membrane. The catalysed reaction is alpha-ribazole + adenosylcob(III)inamide-GDP = adenosylcob(III)alamin + GMP + H(+). It carries out the reaction alpha-ribazole 5'-phosphate + adenosylcob(III)inamide-GDP = adenosylcob(III)alamin 5'-phosphate + GMP + H(+). It functions in the pathway cofactor biosynthesis; adenosylcobalamin biosynthesis; adenosylcobalamin from cob(II)yrinate a,c-diamide: step 7/7. Functionally, joins adenosylcobinamide-GDP and alpha-ribazole to generate adenosylcobalamin (Ado-cobalamin). Also synthesizes adenosylcobalamin 5'-phosphate from adenosylcobinamide-GDP and alpha-ribazole 5'-phosphate. This is Adenosylcobinamide-GDP ribazoletransferase from Clostridium acetobutylicum (strain ATCC 824 / DSM 792 / JCM 1419 / IAM 19013 / LMG 5710 / NBRC 13948 / NRRL B-527 / VKM B-1787 / 2291 / W).